The sequence spans 240 residues: Sialidase 85-1.2 (240 aa).

Residues 127–142 (DDDDGGDDDDEEDSQE) show a composition bias toward acidic residues. Disordered stretches follow at residues 127–158 (DDDDGGDDDDEEDSQEESSPKESSPEKIGKKP) and 221–240 (HRGGQLWGEPPIPNMRQRDA). A compositionally biased stretch (basic and acidic residues) spans 144-155 (SSPKESSPEKIG).

It belongs to the glycosyl hydrolase 33 family.

The catalysed reaction is Hydrolysis of alpha-(2-&gt;3)-, alpha-(2-&gt;6)-, alpha-(2-&gt;8)- glycosidic linkages of terminal sialic acid residues in oligosaccharides, glycoproteins, glycolipids, colominic acid and synthetic substrates.. Developmentally regulated neuraminidase implicated in parasite invasion of cells. May contribute to the pathology during T.cruzi infection by cleaving sialic acid from cells of the immune system. In Trypanosoma cruzi, this protein is Sialidase 85-1.2 (SA85-1.2).